Consider the following 329-residue polypeptide: 3-isopropylmalate dehydrogenase (329 aa).

Arginine 83, arginine 93, arginine 114, and aspartate 200 together coordinate substrate. Positions 200, 224, and 228 each coordinate Mg(2+). An NAD(+)-binding site is contributed by 257-269 (GSAPQIAGKNIAN).

Belongs to the isocitrate and isopropylmalate dehydrogenases family. In terms of assembly, homotetramer. Mg(2+) serves as cofactor. The cofactor is Mn(2+).

It is found in the cytoplasm. The enzyme catalyses (2R,3S)-3-isopropylmalate + NAD(+) = 4-methyl-2-oxopentanoate + CO2 + NADH. The protein operates within amino-acid biosynthesis; L-leucine biosynthesis; L-leucine from 3-methyl-2-oxobutanoate: step 3/4. Catalyzes the oxidation of 3-carboxy-2-hydroxy-4-methylpentanoate (3-isopropylmalate) to 3-carboxy-4-methyl-2-oxopentanoate. The product decarboxylates to 4-methyl-2 oxopentanoate. The protein is 3-isopropylmalate dehydrogenase (leuB) of Methanothermobacter thermautotrophicus (strain ATCC 29096 / DSM 1053 / JCM 10044 / NBRC 100330 / Delta H) (Methanobacterium thermoautotrophicum).